A 192-amino-acid polypeptide reads, in one-letter code: MAALRPGSRALRRLLCRSFSGGGGVRLARERPTDHRDAASSRVSRFCPPRQSCHDWIGPPDKCSNLRPVHFHIPENESPLEQRLRELRQETQEWNQQFWAKQNLSFNKEKEEFIYSRLQAKGAGLRTESGQRATLDAEEMADFYKDFLSKNFQKHMRYNRDWYKRNFAITFFMGKVVLERMWSKLRQKKTSS.

Residues 1–26 constitute a mitochondrion transit peptide; that stretch reads MAALRPGSRALRRLLCRSFSGGGGVR.

Belongs to the COA8 family. In terms of processing, N-terminal mitochondrial targeting sequence is cleaved from the mature protein once in the mitochondrion. Post-translationally, in normal conditions, the cytoplasmic precursor protein is rapidly degraded by the ubiquitination-proteasome system (UPS). Oxidative stress induces protein stabilization and import into mitochondria where it protects COX from degradation. As to expression, expressed in atherosclerotic smooth muscle cells (at protein level). Expressed in aorta, brain, heart, kidney, liver, lung and spleen. Isoform 1 is strongly expressed in Kidney. Isoform 2 is strongly expressed in brain.

It is found in the mitochondrion inner membrane. In terms of biological role, required for cytochrome c complex (COX) IV assembly and function Protects COX assembly from oxidation-induced degradation, COX being the terminal component of the mitochondrial respiratory chain. The sequence is that of Cytochrome c oxidase assembly factor 8 (Coa8) from Mus musculus (Mouse).